We begin with the raw amino-acid sequence, 334 residues long: Glyceraldehyde-3-phosphate dehydrogenase (334 aa).

NAD(+)-binding positions include 12–13 (TI) and Gly111. 140 to 142 (SCN) contacts D-glyceraldehyde 3-phosphate. Residue Cys141 is the Nucleophile of the active site. Arg167 is an NAD(+) binding site. 192-193 (HG) serves as a coordination point for D-glyceraldehyde 3-phosphate. Gln298 provides a ligand contact to NAD(+).

This sequence belongs to the glyceraldehyde-3-phosphate dehydrogenase family. Homotetramer.

It localises to the cytoplasm. It catalyses the reaction D-glyceraldehyde 3-phosphate + phosphate + NADP(+) = (2R)-3-phospho-glyceroyl phosphate + NADPH + H(+). The enzyme catalyses D-glyceraldehyde 3-phosphate + phosphate + NAD(+) = (2R)-3-phospho-glyceroyl phosphate + NADH + H(+). Its pathway is carbohydrate degradation; glycolysis; pyruvate from D-glyceraldehyde 3-phosphate: step 1/5. The protein is Glyceraldehyde-3-phosphate dehydrogenase of Thermococcus sibiricus (strain DSM 12597 / MM 739).